The primary structure comprises 927 residues: Probable RNA-dependent RNA polymerase 4 (927 aa).

Residues 98–135 (GESPVQFPRTPGKKSCRASQAEVSLDREDPSPKFLRGD) form a disordered region. Positions 121–135 (SLDREDPSPKFLRGD) are enriched in basic and acidic residues.

The protein belongs to the RdRP family.

It catalyses the reaction RNA(n) + a ribonucleoside 5'-triphosphate = RNA(n+1) + diphosphate. Probably involved in the RNA silencing pathway and required for the generation of small interfering RNAs (siRNAs). In Arabidopsis thaliana (Mouse-ear cress), this protein is Probable RNA-dependent RNA polymerase 4 (RDR4).